Here is a 428-residue protein sequence, read N- to C-terminus: MTLIESIHARQILDSRGNPTVECEVTLMDGAAGRAAVPSGASTGMHEAWELRDGDKSVFMGKGVTTAVKNVNTKIADALEGMDATDQAAVDQAMIELDGTPNKKELGANAILGVSLAVAHAAAASTNQPLFRYLGGAGARMLPAPMMNIINGGEHADNGVDIQEFMVMPLGFERFSDALRCGTEIFHNLKKVLSDKGYSTAVGDEGGFAPDLKSNQEALDVIMTAIDKAGYKAGEQVWIALDAASTEFYDKSSGKYSLDNNQMSGDEMVDFLAGWCDKYPICSIEDGCDEDDWETWKKLTTKIGDKVQLVGDDLFVTNVERLQRGIDEGIANSILIKVNQIGTMTETIDAIQLAHRNGYTSISSHRSGETEDSTIADLAVAMSTGQIKTGSASRSDRMAKYNQLLRIEELLGDAAQYGGPLFAKRITG.

Residue Gln163 participates in (2R)-2-phosphoglycerate binding. Glu205 (proton donor) is an active-site residue. 3 residues coordinate Mg(2+): Asp242, Glu285, and Asp312. Lys337, Arg366, Ser367, and Lys388 together coordinate (2R)-2-phosphoglycerate. The Proton acceptor role is filled by Lys337.

The protein belongs to the enolase family. The cofactor is Mg(2+).

It localises to the cytoplasm. It is found in the secreted. The protein resides in the cell surface. The catalysed reaction is (2R)-2-phosphoglycerate = phosphoenolpyruvate + H2O. It participates in carbohydrate degradation; glycolysis; pyruvate from D-glyceraldehyde 3-phosphate: step 4/5. Its function is as follows. Catalyzes the reversible conversion of 2-phosphoglycerate (2-PG) into phosphoenolpyruvate (PEP). It is essential for the degradation of carbohydrates via glycolysis. This chain is Enolase, found in Rhodopirellula baltica (strain DSM 10527 / NCIMB 13988 / SH1).